The following is a 161-amino-acid chain: Large ribosomal subunit protein mL50 (161 aa).

The disordered stretch occupies residues 27–51; it reads WGGHSKKEEKEVEENSIIPQEKKEP.

This sequence belongs to the mitochondrion-specific ribosomal protein mL50 family. As to quaternary structure, component of the mitochondrial ribosome large subunit (39S) which comprises a 16S rRNA and about 50 distinct proteins.

The protein localises to the mitochondrion. The protein is Large ribosomal subunit protein mL50 (MRPL50) of Gallus gallus (Chicken).